The chain runs to 226 residues: 7-cyano-7-deazaguanine synthase (226 aa).

10-20 (LSGGLDSATAA) contacts ATP. Zn(2+) is bound by residues Cys-191, Cys-199, Cys-202, and Cys-205.

This sequence belongs to the QueC family. It depends on Zn(2+) as a cofactor.

The enzyme catalyses 7-carboxy-7-deazaguanine + NH4(+) + ATP = 7-cyano-7-deazaguanine + ADP + phosphate + H2O + H(+). The protein operates within purine metabolism; 7-cyano-7-deazaguanine biosynthesis. In terms of biological role, catalyzes the ATP-dependent conversion of 7-carboxy-7-deazaguanine (CDG) to 7-cyano-7-deazaguanine (preQ(0)). In Synechococcus sp. (strain CC9605), this protein is 7-cyano-7-deazaguanine synthase.